We begin with the raw amino-acid sequence, 575 residues long: Transcription factor COE2 (575 aa).

The interaction with DNA stretch occupies residues 62 to 65 (RKSN). The segment at 150 to 169 (CRVLLTHEVMCSRCCEKKSC) adopts a C5-type zinc-finger fold. Interaction with DNA regions lie at residues 196–203 (NCLKTAGN) and 235–238 (NNSK). One can recognise an IPT/TIG domain in the interval 253 to 336 (PCIKAISPSE…KGAPGRFIYT (84 aa)). The span at 441–453 (STQGNNQGYIRNT) shows a compositional bias: polar residues. The tract at residues 441-479 (STQGNNQGYIRNTSSISPRGYSSSSTPQQSNYSTSSNSM) is disordered. Over residues 454-479 (SSISPRGYSSSSTPQQSNYSTSSNSM) the composition is skewed to low complexity.

It belongs to the COE family. As to quaternary structure, forms either a homodimer or a heterodimer with a related family member. Interacts with SIX1. In terms of tissue distribution, in adult expressed in olfactory epithelium and at a much lower level in Purkinje cells of the cerebellum. In embryo expressed in epithalamus, in cells near the ventricular zone of mesencephalon and on the ventral surface of rhombencephalon, in the developing vomeronasal organ, at a lower level in developing spinal cord. Not expressed in developing retina, inner ear, dorsal root ganglia, trigeminal ganglia and glossopharyngeal ganglia.

It localises to the nucleus. Transcription factor that, in osteoblasts, activates the decoy receptor for RANKL, TNFRSF11B, which in turn regulates osteoclast differentiation. Acts in synergy with the Wnt-responsive LEF1/CTNNB1 pathway. Recognizes variations of the palindromic sequence 5'-ATTCCCNNGGGAATT-3'. The protein is Transcription factor COE2 (Ebf2) of Mus musculus (Mouse).